The following is a 396-amino-acid chain: Tryptophan synthase beta chain (396 aa).

Lysine 86 carries the N6-(pyridoxal phosphate)lysine modification.

It belongs to the TrpB family. In terms of assembly, tetramer of two alpha and two beta chains. The cofactor is pyridoxal 5'-phosphate.

The catalysed reaction is (1S,2R)-1-C-(indol-3-yl)glycerol 3-phosphate + L-serine = D-glyceraldehyde 3-phosphate + L-tryptophan + H2O. The protein operates within amino-acid biosynthesis; L-tryptophan biosynthesis; L-tryptophan from chorismate: step 5/5. Functionally, the beta subunit is responsible for the synthesis of L-tryptophan from indole and L-serine. In Vibrio vulnificus (strain CMCP6), this protein is Tryptophan synthase beta chain.